Here is a 234-residue protein sequence, read N- to C-terminus: 1-(5-phosphoribosyl)-5-[(5-phosphoribosylamino)methylideneamino] imidazole-4-carboxamide isomerase (234 aa).

Aspartate 9 acts as the Proton acceptor in catalysis. Aspartate 131 serves as the catalytic Proton donor.

The protein belongs to the HisA/HisF family.

Its subcellular location is the cytoplasm. The enzyme catalyses 1-(5-phospho-beta-D-ribosyl)-5-[(5-phospho-beta-D-ribosylamino)methylideneamino]imidazole-4-carboxamide = 5-[(5-phospho-1-deoxy-D-ribulos-1-ylimino)methylamino]-1-(5-phospho-beta-D-ribosyl)imidazole-4-carboxamide. The protein operates within amino-acid biosynthesis; L-histidine biosynthesis; L-histidine from 5-phospho-alpha-D-ribose 1-diphosphate: step 4/9. In Staphylococcus saprophyticus subsp. saprophyticus (strain ATCC 15305 / DSM 20229 / NCIMB 8711 / NCTC 7292 / S-41), this protein is 1-(5-phosphoribosyl)-5-[(5-phosphoribosylamino)methylideneamino] imidazole-4-carboxamide isomerase.